The primary structure comprises 90 residues: Probable Fe(2+)-trafficking protein (90 aa).

The protein belongs to the Fe(2+)-trafficking protein family.

Could be a mediator in iron transactions between iron acquisition and iron-requiring processes, such as synthesis and/or repair of Fe-S clusters in biosynthetic enzymes. The polypeptide is Probable Fe(2+)-trafficking protein (Pseudomonas fluorescens (strain ATCC BAA-477 / NRRL B-23932 / Pf-5)).